The chain runs to 248 residues: MEQFKGLQKSLYIWTDSAELDKRVETLKAATGGEVAVENVHRLSFSSYANSSFDLIVIECAQLTDNYVKLLHMLKPSGILHLFAYIGPAGSLLQEIKLSGFINCREDAVANTLTAEKPGYETGSSARLSFAKKTSSVNVWKISGDDEELIDEEELLDEEDKQKPDPAGLRVCSTTGKRKACKNCSCGLAEELESEKTTKTVTENAKSSCGNCYLGDAFRCSTCPYLGMPAFKPGEKVQLADNLLKSDI.

The tract at residues 4 to 130 (FKGLQKSLYI…ETGSSARLSF (127 aa)) is N-terminal SAM-like domain. Residues 131–161 (AKKTSSVNVWKISGDDEELIDEEELLDEEDK) are linker. Positions 172, 181, 184, and 186 each coordinate [2Fe-2S] cluster. Positions 172-186 (CSTTGKRKACKNCSC) are fe-S binding site A. The [4Fe-4S] cluster site is built by C209, C212, C220, and C223. 2 short sequence motifs (cx2C motif) span residues 209–212 (CGNC) and 220–223 (CSTC). A fe-S binding site B region spans residues 209–223 (CGNCYLGDAFRCSTC).

This sequence belongs to the anamorsin family. In terms of assembly, monomer. It depends on [2Fe-2S] cluster as a cofactor. [4Fe-4S] cluster serves as cofactor.

It is found in the cytoplasm. The protein resides in the mitochondrion intermembrane space. Its function is as follows. Component of the cytosolic iron-sulfur (Fe-S) protein assembly (CIA) machinery. Required for the maturation of extramitochondrial Fe-S proteins. Part of an electron transfer chain functioning in an early step of cytosolic Fe-S biogenesis, facilitating the de novo assembly of a [4Fe-4S] cluster on the cytosolic Fe-S scaffold complex. Electrons are transferred from NADPH via a FAD- and FMN-containing diflavin oxidoreductase. Together with the diflavin oxidoreductase, also required for the assembly of the diferric tyrosyl radical cofactor of ribonucleotide reductase (RNR), probably by providing electrons for reduction during radical cofactor maturation in the catalytic small subunit. The protein is Anamorsin homolog of Drosophila virilis (Fruit fly).